A 151-amino-acid polypeptide reads, in one-letter code: Methylated-DNA--protein-cysteine methyltransferase (151 aa).

Cysteine 119 (nucleophile; methyl group acceptor) is an active-site residue.

The protein belongs to the MGMT family.

Its subcellular location is the cytoplasm. It carries out the reaction a 6-O-methyl-2'-deoxyguanosine in DNA + L-cysteinyl-[protein] = S-methyl-L-cysteinyl-[protein] + a 2'-deoxyguanosine in DNA. The catalysed reaction is a 4-O-methyl-thymidine in DNA + L-cysteinyl-[protein] = a thymidine in DNA + S-methyl-L-cysteinyl-[protein]. In terms of biological role, involved in the cellular defense against the biological effects of O6-methylguanine (O6-MeG) and O4-methylthymine (O4-MeT) in DNA. Repairs the methylated nucleobase in DNA by stoichiometrically transferring the methyl group to a cysteine residue in the enzyme. This is a suicide reaction: the enzyme is irreversibly inactivated. The sequence is that of Methylated-DNA--protein-cysteine methyltransferase from Saccharolobus islandicus (strain Y.N.15.51 / Yellowstone #2) (Sulfolobus islandicus).